Reading from the N-terminus, the 539-residue chain is CTP synthase (539 aa).

An amidoligase domain region spans residues 1–267 (MTKYIFVTGG…DQKVCDFLHL (267 aa)). A CTP-binding site is contributed by Ser13. A UTP-binding site is contributed by Ser13. 14–19 (SLGKGI) is an ATP binding site. Tyr54 provides a ligand contact to L-glutamine. Asp71 contributes to the ATP binding site. Residues Asp71 and Glu141 each coordinate Mg(2+). CTP-binding positions include 148–150 (DIE), 188–193 (KTKPTQ), and Lys224. Residues 188–193 (KTKPTQ) and Lys224 each bind UTP. The Glutamine amidotransferase type-1 domain maps to 294–537 (KITLVGKYVE…IGAASGLPAQ (244 aa)). Gly356 contacts L-glutamine. The Nucleophile; for glutamine hydrolysis role is filled by Cys383. Residues 384-387 (LGMQ), Glu407, and Arg465 contribute to the L-glutamine site. Residues His510 and Glu512 contribute to the active site.

The protein belongs to the CTP synthase family. Homotetramer.

The catalysed reaction is UTP + L-glutamine + ATP + H2O = CTP + L-glutamate + ADP + phosphate + 2 H(+). The enzyme catalyses L-glutamine + H2O = L-glutamate + NH4(+). It carries out the reaction UTP + NH4(+) + ATP = CTP + ADP + phosphate + 2 H(+). It participates in pyrimidine metabolism; CTP biosynthesis via de novo pathway; CTP from UDP: step 2/2. Allosterically activated by GTP, when glutamine is the substrate; GTP has no effect on the reaction when ammonia is the substrate. The allosteric effector GTP functions by stabilizing the protein conformation that binds the tetrahedral intermediate(s) formed during glutamine hydrolysis. Inhibited by the product CTP, via allosteric rather than competitive inhibition. Catalyzes the ATP-dependent amination of UTP to CTP with either L-glutamine or ammonia as the source of nitrogen. Regulates intracellular CTP levels through interactions with the four ribonucleotide triphosphates. This chain is CTP synthase, found in Lactobacillus acidophilus (strain ATCC 700396 / NCK56 / N2 / NCFM).